A 189-amino-acid chain; its full sequence is Interleukin-23 subunit alpha (189 aa).

Positions 1 to 19 (MLGSRAVMLLLLLPWTAQG) are cleaved as a signal peptide. A disulfide bond links Cys77 and Cys89.

Belongs to the IL-6 superfamily. Heterodimer with IL12B; disulfide-linked. The heterodimer is known as interleukin IL-23. Interacts with IL23R; this interaction enables recruitment of IL12RB1. As to expression, secreted by activated dendritic and phagocytic cells and keratinocytes. Also expressed by dermal Langerhans cells (at protein level).

It localises to the secreted. In terms of biological role, associates with IL12B to form the pro-inflammatory cytokine IL-23 that plays different roles in innate and adaptive immunity. Released by antigen-presenting cells such as dendritic cells or macrophages, binds to a heterodimeric receptor complex composed of IL12RB1 and IL23R to activate JAK2 and TYK2 which then phosphorylate the receptor to form a docking site leading to the phosphorylation of STAT3 and STAT4. This process leads to activation of several pathways including p38 MAPK or NF-kappa-B and promotes the production of pro-inflammatory cytokines such as interleukin-17A/IL17A. In turn, participates in the early and effective intracellular bacterial clearance. Promotes the expansion and survival of T-helper 17 cells, a CD4-positive helper T-cell subset that produces IL-17, as well as other IL-17-producing cells. The sequence is that of Interleukin-23 subunit alpha (IL23A) from Homo sapiens (Human).